A 566-amino-acid polypeptide reads, in one-letter code: 2-isopropylmalate synthase (566 aa).

The 275-residue stretch at 32–306 (PLWCAVDLRD…DPQIDFSNID (275 aa)) folds into the Pyruvate carboxyltransferase domain. Positions 41, 245, 247, and 281 each coordinate Mg(2+). The interval 451–566 (PVRPLERIKQ…VVSAINRASR (116 aa)) is regulatory domain.

Belongs to the alpha-IPM synthase/homocitrate synthase family. LeuA type 2 subfamily. As to quaternary structure, homodimer. It depends on Mg(2+) as a cofactor.

The protein localises to the cytoplasm. The enzyme catalyses 3-methyl-2-oxobutanoate + acetyl-CoA + H2O = (2S)-2-isopropylmalate + CoA + H(+). It participates in amino-acid biosynthesis; L-leucine biosynthesis; L-leucine from 3-methyl-2-oxobutanoate: step 1/4. Its function is as follows. Catalyzes the condensation of the acetyl group of acetyl-CoA with 3-methyl-2-oxobutanoate (2-ketoisovalerate) to form 3-carboxy-3-hydroxy-4-methylpentanoate (2-isopropylmalate). The chain is 2-isopropylmalate synthase from Mycobacterium ulcerans (strain Agy99).